Here is a 204-residue protein sequence, read N- to C-terminus: MGAVTDDEVIRKRLLIDGDGAGDDRRINLLVKSFIKWCNSGSQEEGYSQYQRMLSTLSQCEFSMGKTLLVYDMNLREMENYEKIYKEIECSIAGAHEKIAECKKQILQAKRIRKNRQEYDALAKVIQHHPDRHETLKELEALGKELEHLSHIKESVEDKLELRRKQFHVLLSTIHELQQTLENDDKLSEVDEAQESTMEADPKP.

At Gly-2 the chain carries N-acetylglycine. Thr-5 carries the post-translational modification Phosphothreonine. Lys-36 carries the post-translational modification N6-acetyllysine. An interaction with THOC5 region spans residues 50-137; it reads YQRMLSTLSQ…HHPDRHETLK (88 aa). Residues 105 to 204 form an interaction with NIF3L1 region; it reads QILQAKRIRK…ESTMEADPKP (100 aa). A coiled-coil region spans residues 146-204; it reads LEHLSHIKESVEDKLELRRKQFHVLLSTIHELQQTLENDDKLSEVDEAQESTMEADPKP. The interval 182–204 is disordered; the sequence is ENDDKLSEVDEAQESTMEADPKP.

The protein belongs to the THOC7 family. As to quaternary structure, tetramer; as part of a THO-DDX39B complex. Component of the THO subcomplex, which is composed of THOC1, THOC2, THOC3, THOC5, THOC6 and THOC7. Component of the transcription/export (TREX) complex at least composed of ALYREF/THOC4, DDX39B, SARNP/CIP29, CHTOP and the THO subcomplex; in the complex interacts with THOC1, THOC2 and THOC5; forms a coiled-coil dimer with THOC5; together with THOC5 and THOC6, plays a key structural role in the oligomerization of the THO-DDX39B complex. TREX seems to have a dynamic structure involving ATP-dependent remodeling. Interacts with NIF3L1. In terms of tissue distribution, ubiquitously expressed.

The protein localises to the cytoplasm. It is found in the nucleus. Its subcellular location is the nucleus speckle. Functionally, component of the THO subcomplex of the TREX complex which is thought to couple mRNA transcription, processing and nuclear export, and which specifically associates with spliced mRNA and not with unspliced pre-mRNA. Required for efficient export of polyadenylated RNA. Plays a key structural role in the oligomerization of the THO-DDX39B complex. TREX is recruited to spliced mRNAs by a transcription-independent mechanism, binds to mRNA upstream of the exon-junction complex (EJC) and is recruited in a splicing- and cap-dependent manner to a region near the 5' end of the mRNA where it functions in mRNA export to the cytoplasm via the TAP/NXF1 pathway. This is THO complex subunit 7 homolog (Thoc7) from Mus musculus (Mouse).